We begin with the raw amino-acid sequence, 249 residues long: Probable transcriptional regulatory protein Tfu_2096 (249 aa).

It belongs to the TACO1 family.

The protein resides in the cytoplasm. This Thermobifida fusca (strain YX) protein is Probable transcriptional regulatory protein Tfu_2096.